The primary structure comprises 254 residues: Urease accessory protein UreD (254 aa).

This sequence belongs to the UreD family. UreD, UreF and UreG form a complex that acts as a GTP-hydrolysis-dependent molecular chaperone, activating the urease apoprotein by helping to assemble the nickel containing metallocenter of UreC. The UreE protein probably delivers the nickel.

The protein resides in the cytoplasm. Its function is as follows. Required for maturation of urease via the functional incorporation of the urease nickel metallocenter. This Streptomyces coelicolor (strain ATCC BAA-471 / A3(2) / M145) protein is Urease accessory protein UreD.